A 204-amino-acid chain; its full sequence is Large ribosomal subunit protein eL15 (204 aa).

Belongs to the eukaryotic ribosomal protein eL15 family. Component of the large ribosomal subunit.

The protein resides in the cytoplasm. Its function is as follows. Component of the large ribosomal subunit. The ribosome is a large ribonucleoprotein complex responsible for the synthesis of proteins in the cell. This is Large ribosomal subunit protein eL15 (rpl15) from Paramisgurnus dabryanus.